The sequence spans 203 residues: Endo-type membrane-bound lytic murein transglycosylase A (203 aa).

An N-terminal signal peptide occupies residues 1-15; sequence MKLRWLLILVVFLAG. C16 is lipidated: N-palmitoyl cysteine. C16 carries the S-diacylglycerol cysteine lipid modification.

The protein belongs to the transglycosylase Slt family.

The protein localises to the cell outer membrane. It catalyses the reaction Endolytic cleavage of the (1-&gt;4)-beta-glycosidic linkage between N-acetylmuramic acid (MurNAc) and N-acetylglucosamine (GlcNAc) residues in peptidoglycan with concomitant formation of a 1,6-anhydrobond in the MurNAc residue.. In terms of biological role, murein-degrading enzyme. May play a role in recycling of muropeptides during cell elongation and/or cell division. Preferentially cleaves at a distance of more than two disaccharide units from the ends of the glycan chain. The polypeptide is Endo-type membrane-bound lytic murein transglycosylase A (Klebsiella pneumoniae subsp. pneumoniae (strain ATCC 700721 / MGH 78578)).